Consider the following 243-residue polypeptide: Putative outer membrane protein RP075 (243 aa).

Positions 1-23 (MLRIVKKLWVILFISNISINSFA) are cleaved as a signal peptide.

The protein belongs to the OmpW/AlkL family.

It is found in the cell outer membrane. This is Putative outer membrane protein RP075 from Rickettsia prowazekii (strain Madrid E).